The sequence spans 124 residues: Histone H2B, embryonic (124 aa).

The disordered stretch occupies residues methionine 1–lysine 31. O-linked (GlcNAc) serine glycosylation is present at serine 111. Residue lysine 119 forms a Glycyl lysine isopeptide (Lys-Gly) (interchain with G-Cter in ubiquitin) linkage.

This sequence belongs to the histone H2B family. The nucleosome is a histone octamer containing two molecules each of H2A, H2B, H3 and H4 assembled in one H3-H4 heterotetramer and two H2A-H2B heterodimers. The octamer wraps approximately 147 bp of DNA. Post-translationally, monoubiquitination of Lys-119 gives a specific tag for epigenetic transcriptional activation and is also prerequisite for histone H3 'Lys-4' and 'Lys-79' methylation. GlcNAcylation at Ser-111 promotes monoubiquitination of Lys-119. It fluctuates in response to extracellular glucose, and associates with transcribed genes.

The protein localises to the nucleus. Its subcellular location is the chromosome. Its function is as follows. Core component of nucleosome. Nucleosomes wrap and compact DNA into chromatin, limiting DNA accessibility to the cellular machineries which require DNA as a template. Histones thereby play a central role in transcription regulation, DNA repair, DNA replication and chromosomal stability. DNA accessibility is regulated via a complex set of post-translational modifications of histones, also called histone code, and nucleosome remodeling. The protein is Histone H2B, embryonic of Strongylocentrotus purpuratus (Purple sea urchin).